A 64-amino-acid chain; its full sequence is MKNKTHKGTAKRVKVTGSGKLVREQANRRHLLEGKPSTRTRRLKGIVEVSPADTKRMKRLLGKA.

Positions 1-14 are enriched in basic residues; it reads MKNKTHKGTAKRVK. The interval 1-30 is disordered; sequence MKNKTHKGTAKRVKVTGSGKLVREQANRRH. The span at 21 to 30 shows a compositional bias: basic and acidic residues; the sequence is LVREQANRRH.

Belongs to the bacterial ribosomal protein bL35 family.

This Corynebacterium efficiens (strain DSM 44549 / YS-314 / AJ 12310 / JCM 11189 / NBRC 100395) protein is Large ribosomal subunit protein bL35.